The sequence spans 1375 residues: DNA-directed RNA polymerase subunit beta (1375 aa).

This sequence belongs to the RNA polymerase beta chain family. The RNAP catalytic core consists of 2 alpha, 1 beta, 1 beta' and 1 omega subunit. When a sigma factor is associated with the core the holoenzyme is formed, which can initiate transcription.

The enzyme catalyses RNA(n) + a ribonucleoside 5'-triphosphate = RNA(n+1) + diphosphate. DNA-dependent RNA polymerase catalyzes the transcription of DNA into RNA using the four ribonucleoside triphosphates as substrates. This chain is DNA-directed RNA polymerase subunit beta, found in Oleidesulfovibrio alaskensis (strain ATCC BAA-1058 / DSM 17464 / G20) (Desulfovibrio alaskensis).